Here is a 318-residue protein sequence, read N- to C-terminus: Small ribosomal subunit protein mS26 (318 aa).

A disordered region spans residues I295–L318. Over residues N300 to L318 the composition is skewed to low complexity.

Belongs to the mitochondrion-specific ribosomal protein mS26 family. In terms of assembly, component of the mitochondrial small ribosomal subunit (mt-SSU). Mature yeast 74S mitochondrial ribosomes consist of a small (37S) and a large (54S) subunit. The 37S small subunit contains a 15S ribosomal RNA (15S mt-rRNA) and 34 different proteins. The 54S large subunit contains a 21S rRNA (21S mt-rRNA) and 46 different proteins.

The protein resides in the mitochondrion. Its function is as follows. Component of the mitochondrial ribosome (mitoribosome), a dedicated translation machinery responsible for the synthesis of mitochondrial genome-encoded proteins, including at least some of the essential transmembrane subunits of the mitochondrial respiratory chain. The mitoribosomes are attached to the mitochondrial inner membrane and translation products are cotranslationally integrated into the membrane. This is Small ribosomal subunit protein mS26 (PET123) from Saccharomyces cerevisiae (strain ATCC 204508 / S288c) (Baker's yeast).